Here is a 445-residue protein sequence, read N- to C-terminus: Trigger factor (445 aa).

In terms of domain architecture, PPIase FKBP-type spans 162-247 (GDQVTIDAIG…IKAVHTAEPT (86 aa)).

This sequence belongs to the FKBP-type PPIase family. Tig subfamily.

It is found in the cytoplasm. The enzyme catalyses [protein]-peptidylproline (omega=180) = [protein]-peptidylproline (omega=0). Its function is as follows. Involved in protein export. Acts as a chaperone by maintaining the newly synthesized protein in an open conformation. Functions as a peptidyl-prolyl cis-trans isomerase. The polypeptide is Trigger factor (Rickettsia rickettsii (strain Sheila Smith)).